We begin with the raw amino-acid sequence, 806 residues long: Transitional endoplasmic reticulum ATPase (806 aa).

A2 is modified (N-acetylalanine). 2 positions are modified to phosphoserine: S3 and S7. K8 is covalently cross-linked (Glycyl lysine isopeptide (Lys-Gly) (interchain with G-Cter in SUMO2)). Phosphoserine is present on S13. A Glycyl lysine isopeptide (Lys-Gly) (interchain with G-Cter in SUMO2) cross-link involves residue K18. The residue at position 37 (S37) is a Phosphoserine. 247-253 is an ATP binding site; that stretch reads PGTGKTL. K315 carries the N6,N6,N6-trimethyllysine; by VCPKMT modification. 2 residues coordinate ATP: N348 and H384. T436 bears the Phosphothreonine mark. S462 is subject to Phosphoserine. K502 and K505 each carry N6-acetyllysine. 521 to 526 lines the ATP pocket; that stretch reads GCGKTL. At K668 the chain carries N6-acetyllysine; alternate. The residue at position 668 (K668) is an N6-succinyllysine; alternate. S702 carries the phosphoserine modification. The disordered stretch occupies residues 708–727; it reads RRERERQTNPSAMEVEEDDP. An N6-acetyllysine modification is found at K754. The segment at 768-806 is disordered; the sequence is FGSFRFPSGNQGGAGPSQGSGGGTGGSVYTEDNDDDLYG. Residues S770, S775, and S787 each carry the phosphoserine modification. The segment covering 777–793 has biased composition (gly residues); the sequence is NQGGAGPSQGSGGGTGG. The tract at residues 797 to 806 is interaction with UBXN6; the sequence is TEDNDDDLYG. Residue Y805 is modified to Phosphotyrosine.

Belongs to the AAA ATPase family. In terms of assembly, homohexamer. Forms a ring-shaped particle of 12.5 nm diameter, that displays 6-fold radial symmetry. Part of a ternary complex containing STX5A, NSFL1C and VCP. NSFL1C forms a homotrimer that binds to one end of a VCP homohexamer. The complex binds to membranes enriched in phosphatidylethanolamine-containing lipids and promotes Golgi membrane fusion. Binds to a heterodimer of NPLOC4 and UFD1, binding to this heterodimer inhibits Golgi-membrane fusion. Interaction with VCIP135 leads to dissociation of the complex via ATP hydrolysis by VCP. Part of a ternary complex containing NPLOC4, UFD1 and VCP. Interacts with NSFL1C-like protein p37; the complex has membrane fusion activity and is required for Golgi and endoplasmic reticulum biogenesis. Interacts with SELENOS and SYVN1, as well as with DERL1 (via SHP-box motif), DERL2 and DERL3; which probably transfer misfolded proteins from the ER to VCP. Interacts with SVIP and DERL1. Component of a complex required to couple retrotranslocation, ubiquitination and deglycosylation composed of NGLY1, SAKS1, AMFR, VCP and RAD23B. Part of a complex composed of STUB1/CHIP, VCP/p97, CHRNA3, and UBXN2A that modulates the ubiquitination and endoplasmic reticulum-associated degradation (ERAD) of CHRNA3. Within the complex UBXN2A acts as a scaffold protein required for the interaction of CHRNA3 with VCP/p97, this interaction also inhibits CHRNA3 ubiquitination by STUB1/CHIP and subsequently ERAD. Interacts with UBXN2A (via UBX domain); the interaction is required for the interaction of CHRNA3 in the STUB1-VCP-UBXN2A complex. Directly interacts with UBXN4 and RNF19A. Interacts with CASR. Interacts with UBE4B and YOD1. Interacts with clathrin. Interacts with RNF103. Interacts with TRIM13 and TRIM21. Component of a VCP/p97-AMFR/gp78 complex that participates in the final step of the endoplasmic reticulum-associated degradation (ERAD) of HMGCR. Interacts directly with AMFR/gp78 (via its VIM). Interacts with RHBDD1 (via C-terminal domain). Interacts with SPRTN; leading to recruitment to stalled replication forks. Interacts with WASHC5. Interacts with UBOX5. Interacts (via N-terminus) with UBXN7, UBXN8, and probably several other UBX domain-containing proteins (via UBX domains); the interactions are mutually exclusive with VIM-dependent interactions such as those with AMFR and SELENOS. Forms a complex with UBQLN1 and UBXN4. Interacts (via the PIM motif) with RNF31 (via the PUB domain). Interacts with RIGI and RNF125; interaction takes place when RIGI is ubiquitinated via 'Lys-63'-linked ubiquitin on its CARD domains, leading to recruit RNF125 and promote ubiquitination and degradation of RIGI. Interacts with BAG6. Interacts with UBXN10. Interacts with UBXN6; the interaction with UBXN6 is direct and competitive with UFD1. Forms a ternary complex with CAV1 and UBXN6. Interacts with PLAA, UBXN6 and YOD1; may form a complex involved in macroautophagy. Interacts with ANKZF1. Interacts with ubiquitin-binding protein FAF1. Interacts with ZFAND2B (via VIM motif); the interaction is direct. Interacts with ZFAND1 (via its ubiquitin-like region); this interaction occurs in an arsenite-dependent manner. Interacts with CCDC47. Interacts with LMBR1L and UBAC2. Interacts with ATXN3. Interacts with TEX264; bridging VCP to covalent DNA-protein cross-links (DPCs). The cofactor is Mg(2+). ISGylated. In terms of processing, methylation at Lys-315 catalyzed by VCPKMT is increased in the presence of ASPSCR1. Lys-315 methylation may decrease ATPase activity. Post-translationally, phosphorylated by tyrosine kinases in response to T-cell antigen receptor activation. Phosphorylated in mitotic cells.

The protein resides in the cytoplasm. It localises to the cytosol. Its subcellular location is the endoplasmic reticulum. It is found in the nucleus. The protein localises to the stress granule. It carries out the reaction ATP + H2O = ADP + phosphate + H(+). Its function is as follows. Necessary for the fragmentation of Golgi stacks during mitosis and for their reassembly after mitosis. Involved in the formation of the transitional endoplasmic reticulum (tER). The transfer of membranes from the endoplasmic reticulum to the Golgi apparatus occurs via 50-70 nm transition vesicles which derive from part-rough, part-smooth transitional elements of the endoplasmic reticulum (tER). Vesicle budding from the tER is an ATP-dependent process. The ternary complex containing UFD1, VCP and NPLOC4 binds ubiquitinated proteins and is necessary for the export of misfolded proteins from the ER to the cytoplasm, where they are degraded by the proteasome. The NPLOC4-UFD1-VCP complex regulates spindle disassembly at the end of mitosis and is necessary for the formation of a closed nuclear envelope. Regulates E3 ubiquitin-protein ligase activity of RNF19A. Component of the VCP/p97-AMFR/gp78 complex that participates in the final step of the sterol-mediated ubiquitination and endoplasmic reticulum-associated degradation (ERAD) of HMGCR. Mediates the endoplasmic reticulum-associated degradation of CHRNA3 in cortical neurons as part of the STUB1-VCP-UBXN2A complex. Involved in endoplasmic reticulum stress-induced pre-emptive quality control, a mechanism that selectively attenuates the translocation of newly synthesized proteins into the endoplasmic reticulum and reroutes them to the cytosol for proteasomal degradation. Involved in clearance process by mediating G3BP1 extraction from stress granules. Also involved in DNA damage response: recruited to double-strand breaks (DSBs) sites in a RNF8- and RNF168-dependent manner and promotes the recruitment of TP53BP1 at DNA damage sites. Recruited to stalled replication forks by SPRTN: may act by mediating extraction of DNA polymerase eta (POLH) to prevent excessive translesion DNA synthesis and limit the incidence of mutations induced by DNA damage. Together with SPRTN metalloprotease, involved in the repair of covalent DNA-protein cross-links (DPCs) during DNA synthesis. Involved in interstrand cross-link repair in response to replication stress by mediating unloading of the ubiquitinated CMG helicase complex. Mediates extraction of PARP1 trapped to chromatin: recognizes and binds ubiquitinated PARP1 and promotes its removal. Required for cytoplasmic retrotranslocation of stressed/damaged mitochondrial outer-membrane proteins and their subsequent proteasomal degradation. Essential for the maturation of ubiquitin-containing autophagosomes and the clearance of ubiquitinated protein by autophagy. Acts as a negative regulator of type I interferon production by interacting with RIGI: interaction takes place when RIGI is ubiquitinated via 'Lys-63'-linked ubiquitin on its CARD domains, leading to recruit RNF125 and promote ubiquitination and degradation of RIGI. May play a role in the ubiquitin-dependent sorting of membrane proteins to lysosomes where they undergo degradation. May more particularly play a role in caveolins sorting in cells. By controlling the steady-state expression of the IGF1R receptor, indirectly regulates the insulin-like growth factor receptor signaling pathway. The sequence is that of Transitional endoplasmic reticulum ATPase (VCP) from Sus scrofa (Pig).